The primary structure comprises 489 residues: Retinoblastoma-binding protein 5 homolog (489 aa).

6 WD repeats span residues Asp22–Ser63, Ala64–Lys103, Asp147–Ser187, Ser195–Lys234, Val248–His290, and Thr292–Ala330. Positions Asp451–Lys489 are disordered.

As to quaternary structure, core component of several methyltransferase-containing complexes. Component of the SET1 complex, composed at least of the catalytic subunit Set1, wds/WDR5, Wdr82, Rbbp5, ash2, Cfp1/CXXC1, hcf and Dpy-30L1. Component of the MLL3/4 complex composed at least of the catalytic subunit trr, ash2, Rbbp5, Dpy-30L1, wds, hcf, ptip, Pa1, Utx, Lpt and Ncoa6.

The protein resides in the nucleus. Functionally, component of the SET1 complex that specifically di- and trimethylates 'Lys-4' of histone H3 and of the MLL3/4 complex which also methylates histone H3 'Lys-4'. The protein is Retinoblastoma-binding protein 5 homolog of Drosophila melanogaster (Fruit fly).